The primary structure comprises 101 residues: Rho GTPase-activating protein 39 (101 aa).

Residues 1-96 (YEQCIAHYES…VLIQHLDTSF (96 aa)) form the Rho-GAP domain.

In terms of tissue distribution, preoptic area and testis.

The chain is Rho GTPase-activating protein 39 (Arhgap39) from Rattus norvegicus (Rat).